Here is a 49-residue protein sequence, read N- to C-terminus: Large ribosomal subunit protein bL33 (49 aa).

The protein belongs to the bacterial ribosomal protein bL33 family.

The chain is Large ribosomal subunit protein bL33 from Pelotomaculum thermopropionicum (strain DSM 13744 / JCM 10971 / SI).